The primary structure comprises 168 residues: Cytochrome c-type biogenesis protein CcmE (168 aa).

The Cytoplasmic portion of the chain corresponds to 1–7 (MTRKQRR). Residues 8–28 (LMLIGVCGAVLAVALGLVLWA) traverse the membrane as a helical; Signal-anchor for type II membrane protein segment. Over 29–168 (MRGTIVFFRS…SGEKPALRQQ (140 aa)) the chain is Periplasmic. Positions 122 and 126 each coordinate heme. The interval 134–168 (ALKKQGHWQGEAKHPGGTAPAPQTASGEKPALRQQ) is disordered.

The protein belongs to the CcmE/CycJ family.

The protein resides in the cell inner membrane. Its function is as follows. Heme chaperone required for the biogenesis of c-type cytochromes. Transiently binds heme delivered by CcmC and transfers the heme to apo-cytochromes in a process facilitated by CcmF and CcmH. In Methylobacterium nodulans (strain LMG 21967 / CNCM I-2342 / ORS 2060), this protein is Cytochrome c-type biogenesis protein CcmE.